Reading from the N-terminus, the 506-residue chain is GMP synthase [glutamine-hydrolyzing] (506 aa).

The Glutamine amidotransferase type-1 domain occupies 4-192 (KLIILDFGSQ…FLDICGMKRD (189 aa)). C79 serves as the catalytic Nucleophile. Active-site residues include H167 and E169. The GMPS ATP-PPase domain occupies 193-381 (WTPASFIEAT…LGMMPHLIHR (189 aa)). An ATP-binding site is contributed by 220-226 (SGGVDSS).

Homodimer.

The enzyme catalyses XMP + L-glutamine + ATP + H2O = GMP + L-glutamate + AMP + diphosphate + 2 H(+). It participates in purine metabolism; GMP biosynthesis; GMP from XMP (L-Gln route): step 1/1. Catalyzes the synthesis of GMP from XMP. This chain is GMP synthase [glutamine-hydrolyzing], found in Porphyromonas gingivalis (strain ATCC BAA-308 / W83).